Here is an 860-residue protein sequence, read N- to C-terminus: Leucine--tRNA ligase (860 aa).

A 'HIGH' region motif is present at residues 42–52; the sequence is PYPSGRLHMGH. The 'KMSKS' region motif lies at 619 to 623; sequence KMSKS. Residue Lys622 participates in ATP binding.

Belongs to the class-I aminoacyl-tRNA synthetase family.

It localises to the cytoplasm. The enzyme catalyses tRNA(Leu) + L-leucine + ATP = L-leucyl-tRNA(Leu) + AMP + diphosphate. This chain is Leucine--tRNA ligase, found in Salmonella paratyphi B (strain ATCC BAA-1250 / SPB7).